The primary structure comprises 469 residues: Chromosomal replication initiator protein DnaA (469 aa).

The segment at 1-83 (MSEWDYKIFW…KKISIDFIIK (83 aa)) is domain I, interacts with DnaA modulators. The interval 83 to 128 (KPNTSEDLSKAENEGGNDKKEDAAKPSSAESKKKSVKTEGGRGQHP) is domain II. The disordered stretch occupies residues 89-131 (DLSKAENEGGNDKKEDAAKPSSAESKKKSVKTEGGRGQHPDLR). A domain III, AAA+ region region spans residues 129–344 (DLRPEYNFED…AALTKLIAYT (216 aa)). 4 residues coordinate ATP: Gly-173, Gly-175, Lys-176, and Thr-177. Positions 345-469 (ELTKKTMDEA…RNTIKENTNK (125 aa)) are domain IV, binds dsDNA.

The protein belongs to the DnaA family. Oligomerizes as a right-handed, spiral filament on DNA at oriC.

It localises to the cytoplasm. Plays an essential role in the initiation and regulation of chromosomal replication. ATP-DnaA binds to the origin of replication (oriC) to initiate formation of the DNA replication initiation complex once per cell cycle. Binds the DnaA box (a 9 base pair repeat at the origin) and separates the double-stranded (ds)DNA. Forms a right-handed helical filament on oriC DNA; dsDNA binds to the exterior of the filament while single-stranded (ss)DNA is stabiized in the filament's interior. The ATP-DnaA-oriC complex binds and stabilizes one strand of the AT-rich DNA unwinding element (DUE), permitting loading of DNA polymerase. After initiation quickly degrades to an ADP-DnaA complex that is not apt for DNA replication. Binds acidic phospholipids. This is Chromosomal replication initiator protein DnaA from Treponema denticola (strain ATCC 35405 / DSM 14222 / CIP 103919 / JCM 8153 / KCTC 15104).